Consider the following 73-residue polypeptide: Antimicrobial peptide 143 (73 aa).

The N-terminal stretch at 1–22 is a signal peptide; sequence MKVKCLLAVFLIVLIAAEHCQA. At K38 the chain carries Lysine amide. A propeptide spanning residues 44–73 is cleaved from the precursor; it reads ELGTQFRPQQKNFMRREIDLERLFAEMPDY.

The protein belongs to the non-disulfide-bridged peptide (NDBP) superfamily. Short antimicrobial peptide (group 4) family. Expressed by the venom gland.

The protein resides in the secreted. Its subcellular location is the target cell membrane. In terms of biological role, cationic host defense peptide that have antibacterial activity by breaking membranes. Is more effective on Gram-positive than on Gram-negative bacteria. In Lychas mucronatus (Chinese swimming scorpion), this protein is Antimicrobial peptide 143.